The chain runs to 192 residues: Thiosulfate reductase electron transfer subunit PhsB (192 aa).

3 consecutive 4Fe-4S ferredoxin-type domains span residues 8 to 36, 55 to 86, and 87 to 116; these read YVML…VPEG, THFQ…RDEN, and GIVQ…LNPQ. The [4Fe-4S] cluster site is built by cysteine 17, cysteine 20, cysteine 23, cysteine 27, cysteine 64, cysteine 67, cysteine 72, cysteine 76, cysteine 96, cysteine 99, cysteine 102, cysteine 106, cysteine 123, cysteine 126, cysteine 139, and cysteine 143.

In terms of assembly, composed of three subunits: PhsA, PhsB and PhsC. [4Fe-4S] cluster is required as a cofactor.

Its subcellular location is the cell inner membrane. Its function is as follows. Component of the PhsABC thiosulfate reductase that catalyzes the reduction of thiosulfate to sulfite and hydrogen sulfide, with menaquinol as the sole electron donor. Proton motive force (PMF) is required to drive transmembrane electron transfer within the reductase. The PhsB subunit transfers electrons between PhsC and PhsA. This is Thiosulfate reductase electron transfer subunit PhsB (phsB) from Salmonella typhi.